A 634-amino-acid polypeptide reads, in one-letter code: DNA-directed RNA polymerase subunit gamma (634 aa).

Residues Cys74, Cys76, Cys89, and Cys92 each coordinate Zn(2+). Mg(2+)-binding residues include Asp471, Asp473, and Asp475.

It belongs to the RNA polymerase beta' chain family. RpoC1 subfamily. In terms of assembly, in cyanobacteria the RNAP catalytic core is composed of 2 alpha, 1 beta, 1 beta', 1 gamma and 1 omega subunit. When a sigma factor is associated with the core the holoenzyme is formed, which can initiate transcription. Mg(2+) serves as cofactor. It depends on Zn(2+) as a cofactor.

It carries out the reaction RNA(n) + a ribonucleoside 5'-triphosphate = RNA(n+1) + diphosphate. In terms of biological role, DNA-dependent RNA polymerase catalyzes the transcription of DNA into RNA using the four ribonucleoside triphosphates as substrates. The sequence is that of DNA-directed RNA polymerase subunit gamma from Prochlorococcus marinus subsp. pastoris (strain CCMP1986 / NIES-2087 / MED4).